The chain runs to 317 residues: NADH kinase (317 aa).

Belongs to the NAD kinase family. As to quaternary structure, homodimer. Ubiquitous.

The protein localises to the cytoplasm. It carries out the reaction NADH + ATP = ADP + NADPH + H(+). Two-fold decrease in activity in the presence of PPi, iodoacetate or para-chloromercuribenzoate. In terms of biological role, phosphorylates specifically NADH. Can phosphorylate NAD with a 100-fold decrease in efficiency compared to NADH. Prefers ATP as nucleoside triphosphate substrate. Can also utilize UTP, GTP and CTP. Key source of the cellular reductant NADPH which is an important antioxidant factor. The polypeptide is NADH kinase (NADK3) (Arabidopsis thaliana (Mouse-ear cress)).